Reading from the N-terminus, the 318-residue chain is Endochitinase 3 (318 aa).

Residues 1 to 18 (EFTIFSLLFSLLLLNASA) form the signal peptide. The Chitin-binding type-1 domain occupies 19–60 (EQCGSQAGGALCAPGLCCSKFGWCGNTNDYCGPGNCQSQCPG). Disulfide bonds link cysteine 21-cysteine 36, cysteine 30-cysteine 42, cysteine 35-cysteine 49, cysteine 54-cysteine 58, cysteine 89-cysteine 152, cysteine 164-cysteine 172, and cysteine 271-cysteine 303. Residue glutamate 134 is the Proton donor of the active site. The propeptide at 312–318 (GLLVDTV) is removed in mature form, vacuolar targeting.

Belongs to the glycosyl hydrolase 19 family. Chitinase class I subfamily.

The protein localises to the vacuole. The catalysed reaction is Random endo-hydrolysis of N-acetyl-beta-D-glucosaminide (1-&gt;4)-beta-linkages in chitin and chitodextrins.. In terms of biological role, defense against chitin-containing fungal pathogens. This is Endochitinase 3 (CHTB3) from Solanum tuberosum (Potato).